A 334-amino-acid polypeptide reads, in one-letter code: Rhomboid-like protein 14, mitochondrial (334 aa).

Residues 1–87 constitute a mitochondrion transit peptide; that stretch reads MENFGEGRRS…RLFLSAFYHV (87 aa). 4 helical membrane-spanning segments follow: residues 114 to 134, 146 to 166, 176 to 196, and 197 to 217; these read EFAS…LLLA, AYYN…KVVL, VYGI…LVQM, and FVPN…IIYL. The active-site Nucleophile is serine 156. Catalysis depends on histidine 206, which acts as the Charge relay system. Residues 273-302 form a RanBP2-type zinc finger; it reads GPGIWRCQSCTYDNSGWLSACEMCGSGRAR.

This sequence belongs to the peptidase S54 family.

The protein localises to the mitochondrion membrane. Functionally, probable rhomboid-type serine protease that catalyzes intramembrane proteolysis. May function in the heat-shock response pathway. This chain is Rhomboid-like protein 14, mitochondrial, found in Arabidopsis thaliana (Mouse-ear cress).